A 383-amino-acid chain; its full sequence is MTAPAELSPTLQLACDLIRRPSVTPVDADCQAQMMKRLGAVGFQLEPMRIEDVDNFWATHGNQDGPVLCFAGHTDVVPTGPVQQWQHEPFEALIDADGMLCGRGAADMKGSLASMVVASERFVQDYPNHRGRVAFLITSDEEGPAHHGTKAVVERLIARNERLDWCIVGEPSSTTLLGDVVKNGRRGSLGAKLTVRGKQGHVAYPHLARNPIHLAAPALAELAAEHWDEGNAFFPPTSFQISNLNSGTGATNVVPGDLIAVFNFRFSTESTVEGLQARVSAILDKHELDWSIDWALSGLPFLTEPGELLDAVSASIKGVTGRDTQPSTSGGTSDGRFIATMGTQVVELGPVNATIHQVDERILASDLDLLTEIYYQTLVRLLA.

Residue H73 coordinates Zn(2+). D75 is a catalytic residue. D107 is a Zn(2+) binding site. E141 serves as the catalytic Proton acceptor. Zn(2+) is bound by residues E142, E170, and H356.

Belongs to the peptidase M20A family. DapE subfamily. In terms of assembly, homodimer. Zn(2+) is required as a cofactor. Requires Co(2+) as cofactor.

It catalyses the reaction N-succinyl-(2S,6S)-2,6-diaminopimelate + H2O = (2S,6S)-2,6-diaminopimelate + succinate. It participates in amino-acid biosynthesis; L-lysine biosynthesis via DAP pathway; LL-2,6-diaminopimelate from (S)-tetrahydrodipicolinate (succinylase route): step 3/3. Its function is as follows. Catalyzes the hydrolysis of N-succinyl-L,L-diaminopimelic acid (SDAP), forming succinate and LL-2,6-diaminopimelate (DAP), an intermediate involved in the bacterial biosynthesis of lysine and meso-diaminopimelic acid, an essential component of bacterial cell walls. In Pseudomonas putida (strain W619), this protein is Succinyl-diaminopimelate desuccinylase.